The chain runs to 114 residues: uncharacterized protein (114 aa).

Cys10 is an active-site residue.

This sequence belongs to the ArsC family.

This is an uncharacterized protein from Haemophilus influenzae (strain ATCC 51907 / DSM 11121 / KW20 / Rd).